Here is a 217-residue protein sequence, read N- to C-terminus: UPF0502 protein VFMJ11_A0613 (217 aa).

This sequence belongs to the UPF0502 family.

This Aliivibrio fischeri (strain MJ11) (Vibrio fischeri) protein is UPF0502 protein VFMJ11_A0613.